Here is a 102-residue protein sequence, read N- to C-terminus: Thioredoxin (102 aa).

The Thioredoxin domain maps to valine 2–glutamine 102. Cysteine 30 and cysteine 33 form a disulfide bridge.

It belongs to the thioredoxin family.

Participates in various redox reactions through the reversible oxidation of its active center dithiol to a disulfide and catalyzes dithiol-disulfide exchange reactions. This is Thioredoxin (trxA) from Mycoplasma pneumoniae (strain ATCC 29342 / M129 / Subtype 1) (Mycoplasmoides pneumoniae).